A 534-amino-acid polypeptide reads, in one-letter code: Cytochrome c oxidase subunit 1 (534 aa).

The helical transmembrane segment at 16–36 (VLYFMLAIFSGMAGTAMSLII) threads the bilayer. Ca(2+)-binding residues include Glu-39, Ala-42, and Gly-44. Transmembrane regions (helical) follow at residues 57-77 (VLVV…ALIG), 101-121 (IAFW…LVES), 147-167 (AIFA…NFIV), 182-202 (LPLF…SLPV), 235-255 (LFYF…FGII), and 267-287 (VFGE…GFLV). His-62 contacts Fe(II)-heme a. His-241 provides a ligand contact to Cu cation. The segment at residues 241-245 (HPEVY) is a cross-link (1'-histidyl-3'-tyrosine (His-Tyr)). Tyr-245 contacts O2. Cu cation is bound by residues His-290 and His-291. 2 helical membrane passes run 310–330 (MIIA…IYGG) and 338–358 (MLYA…GVAL). His-368 and Asp-369 together coordinate Mg(2+). 2 consecutive transmembrane segments (helical) span residues 372-392 (YVVG…LFAG) and 414-434 (FWLI…LGIN). Heme a3 is bound at residue His-376. A Fe(II)-heme a-binding site is contributed by His-378. Pro-441 provides a ligand contact to Ca(2+). Residues 452 to 472 (YVASIGSFIATLSLFLFIYIL) traverse the membrane as a helical segment.

It belongs to the heme-copper respiratory oxidase family. As to quaternary structure, component of the cytochrome c oxidase (complex IV, CIV), a multisubunit enzyme composed of a catalytic core of 3 subunits and several supernumerary subunits. The complex exists as a monomer or a dimer and forms supercomplexes (SCs) in the inner mitochondrial membrane with ubiquinol-cytochrome c oxidoreductase (cytochrome b-c1 complex, complex III, CIII). Heme is required as a cofactor. Cu cation serves as cofactor.

The protein localises to the mitochondrion inner membrane. The catalysed reaction is 4 Fe(II)-[cytochrome c] + O2 + 8 H(+)(in) = 4 Fe(III)-[cytochrome c] + 2 H2O + 4 H(+)(out). It functions in the pathway energy metabolism; oxidative phosphorylation. Component of the cytochrome c oxidase, the last enzyme in the mitochondrial electron transport chain which drives oxidative phosphorylation. The respiratory chain contains 3 multisubunit complexes succinate dehydrogenase (complex II, CII), ubiquinol-cytochrome c oxidoreductase (cytochrome b-c1 complex, complex III, CIII) and cytochrome c oxidase (complex IV, CIV), that cooperate to transfer electrons derived from NADH and succinate to molecular oxygen, creating an electrochemical gradient over the inner membrane that drives transmembrane transport and the ATP synthase. Cytochrome c oxidase is the component of the respiratory chain that catalyzes the reduction of oxygen to water. Electrons originating from reduced cytochrome c in the intermembrane space (IMS) are transferred via the dinuclear copper A center (CU(A)) of subunit 2 and heme A of subunit 1 to the active site in subunit 1, a binuclear center (BNC) formed by heme A3 and copper B (CU(B)). The BNC reduces molecular oxygen to 2 water molecules using 4 electrons from cytochrome c in the IMS and 4 protons from the mitochondrial matrix. This chain is Cytochrome c oxidase subunit 1 (COXI), found in Saccharomyces paradoxus (Yeast).